The sequence spans 474 residues: Hepatocyte nuclear factor 4-alpha (474 aa).

Positions 57–132 (SALCAICGDR…AGMKKEAVQN (76 aa)) form a DNA-binding region, nuclear receptor. NR C4-type zinc fingers lie at residues 60-80 (CAIC…CDGC) and 96-120 (CRFS…LKKC). 2 positions are modified to phosphoserine; by PKA: serine 142 and serine 143. Tyrosine 144 bears the Phosphotyrosine mark. In terms of domain architecture, NR LBD spans 147–377 (SSLPSINALL…NLLQEMLLGG (231 aa)). Residue threonine 166 is modified to Phosphothreonine. Position 167 is a phosphoserine (serine 167). Glycyl lysine isopeptide (Lys-Gly) (interchain with G-Cter in ubiquitin) cross-links involve residues lysine 234 and lysine 307. The residue at position 313 (serine 313) is a Phosphoserine; by AMPK. Residues 368 to 376 (NLLQEMLLG) carry the 9aaTAD motif. Residues 413–450 (SNGQMCEWPRPRGQAATPETPQPSPPSGSGSESYKLLP) form a disordered region. A phosphothreonine mark is found at threonine 429 and threonine 432. A Phosphoserine modification is found at serine 436. Lysine 458 bears the N6-acetyllysine mark.

Belongs to the nuclear hormone receptor family. NR2 subfamily. As to quaternary structure, homodimerization is required for HNF4-alpha to bind to its recognition site. Interacts with CLOCK, BMAL1, CRY1, CRY2, PER1 and PER2. Interacts with NR0B2/SHP; the resulting heterodimer is transcriptionally inactive. Interacts with DDX3X; this interaction disrupts the interaction between HNF4 and NR0B2 that forms inactive heterodimers and enhances the formation of active HNF4 homodimers. Phosphorylation at Ser-313 by AMPK reduces the ability to form homodimers and bind DNA. Phosphorylated in the recognition sequence R-R-S-S near the DNA-binding domain; phosphorylation results in decrease in DNA-binding activity. Phosphorylation of HNF4 depends on the diet and is decreased by a carbohydrate-rich diet and is increased by fasting. Post-translationally, the N-terminus is blocked. In terms of processing, acetylation at Lys-458 lowers transcriptional activation by about two-fold. In terms of tissue distribution, liver, kidney and intestine.

The protein resides in the nucleus. Transcriptional regulator which controls the expression of hepatic genes during the transition of endodermal cells to hepatic progenitor cells, facilitating the recruitment of RNA pol II to the promoters of target genes. Activates the transcription of CYP2C38. Represses the CLOCK-BMAL1 transcriptional activity and is essential for circadian rhythm maintenance and period regulation in the liver and colon cells. The polypeptide is Hepatocyte nuclear factor 4-alpha (Hnf4a) (Rattus norvegicus (Rat)).